Consider the following 148-residue polypeptide: Arginine repressor (148 aa).

This sequence belongs to the ArgR family.

It localises to the cytoplasm. Its pathway is amino-acid biosynthesis; L-arginine biosynthesis [regulation]. Regulates arginine biosynthesis genes. The polypeptide is Arginine repressor (Koribacter versatilis (strain Ellin345)).